The chain runs to 116 residues: Phosphoribosyl-AMP cyclohydrolase (116 aa).

Asp-80 is a binding site for Mg(2+). Cys-81 serves as a coordination point for Zn(2+). Mg(2+)-binding residues include Asp-82 and Asp-84. Cys-98 and Cys-105 together coordinate Zn(2+).

This sequence belongs to the PRA-CH family. As to quaternary structure, homodimer. Mg(2+) is required as a cofactor. Zn(2+) serves as cofactor.

The protein resides in the cytoplasm. It catalyses the reaction 1-(5-phospho-beta-D-ribosyl)-5'-AMP + H2O = 1-(5-phospho-beta-D-ribosyl)-5-[(5-phospho-beta-D-ribosylamino)methylideneamino]imidazole-4-carboxamide. Its pathway is amino-acid biosynthesis; L-histidine biosynthesis; L-histidine from 5-phospho-alpha-D-ribose 1-diphosphate: step 3/9. Functionally, catalyzes the hydrolysis of the adenine ring of phosphoribosyl-AMP. The chain is Phosphoribosyl-AMP cyclohydrolase from Trichormus variabilis (strain ATCC 29413 / PCC 7937) (Anabaena variabilis).